Consider the following 904-residue polypeptide: Putative pentatricopeptide repeat-containing protein At1g19290 (904 aa).

PPR repeat units lie at residues 154–188 (SPTVFDMILKVYAEKGLVKNALHVFDNMGNYGRIP), 189–223 (SLLSCNSLLSNLVRKGENFVALHVYDQMISFEVSP), 224–254 (DVFTCSIVVNAYCRSGNVDKAMVFAKETESS), 260–294 (NVVTYNSLINGYAMIGDVEGMTRVLRLMSERGVSR), 295–329 (NVVTYTSLIKGYCKKGLMEEAEHVFELLKEKKLVA), 330–364 (DQHMYGVLMDGYCRTGQIRDAVRVHDNMIEIGVRT), 365–399 (NTTICNSLINGYCKSGQLVEAEQIFSRMNDWSLKP), 400–434 (DHHTYNTLVDGYCRAGYVDEALKLCDQMCQKEVVP), 435–469 (TVMTYNILLKGYSRIGAFHDVLSLWKMMLKRGVNA), 470–504 (DEISCSTLLEALFKLGDFNEAMKLWENVLARGLLT), 505–539 (DTITLNVMISGLCKMEKVNEAKEILDNVNIFRCKP), 540–574 (AVQTYQALSHGYYKVGNLKEAFAVKEYMERKGIFP), 575–609 (TIEMYNTLISGAFKYRHLNKVADLVIELRARGLTP), 610–644 (TVATYGALITGWCNIGMIDKAYATCFEMIEKGITL), 645–679 (NVNICSKIANSLFRLDKIDEACLLLQKIVDFDLLL), 718–753 (NNIVYNVAIAGLCKAGKLEDARKLFSDLLSSDRFIP), 754–788 (DEYTYTILIHGCAIAGDINKAFTLRDEMALKGIIP), 789–823 (NIVTYNALIKGLCKLGNVDRAQRLLHKLPQKGITP), and 824–858 (NAITYNTLIDGLVKSGNVAEAMRLKEKMIEKGLVR).

The protein belongs to the PPR family. P subfamily.

In Arabidopsis thaliana (Mouse-ear cress), this protein is Putative pentatricopeptide repeat-containing protein At1g19290.